A 663-amino-acid polypeptide reads, in one-letter code: MGRYRIRVATGAWLFSGSYNRVQLWLVGTRGEAELELQLRPARGEEEEFDHDVAEDLGLLQFVRLRKHHWLVDDAWFCDRITVQGPGACAEVAFPCYRWVQGEDILSLPEGTARLPGDNALDMFQKHREKELKDRQQIYCWATWKEGLPLTIAADRKDDLPPNMRFHEEKRLDFEWTLKAGALEMALKRVYTLLSSWNCLEDFDQIFWGQKSALAEKVRQCWQDDELFSYQFLNGANPMLLRRSTSLPSRLVLPSGMEELQAQLEKELQNGSLFEADFILLDGIPANVIRGEKQYLAAPLVMLKMEPNGKLQPMVIQIQPPNPSSPTPTLFLPSDPPLAWLLAKSWVRNSDFQLHEIQYHLLNTHLVAEVIAVATMRCLPGLHPIFKFLIPHIRYTMEINTRARTQLISDGGIFDKAVSTGGGGHVQLLRRAAAQLTYCSLCPPDDLADRGLLGLPGALYAHDALRLWEIIARYVEGIVHLFYQRDDIVKGDPELQAWCREITEVGLCQAQDRGFPVSFQSQSQLCHFLTMCVFTCTAQHAAINQGQLDWYAWVPNAPCTMRMPPPTTKEDVTMATVMGSLPDVRQACLQMAISWHLSRRQPDMVPLGHHKEKYFSGPKPKAVLNQFRTDLEKLEKEITARNEQLDWPYEYLKPSCIENSVTI.

The PLAT domain maps to 2 to 114; it reads GRYRIRVATG…ILSLPEGTAR (113 aa). The 549-residue stretch at 115 to 663 folds into the Lipoxygenase domain; sequence LPGDNALDMF…PSCIENSVTI (549 aa). Serine 246 is subject to Phosphoserine. Residues histidine 360, histidine 365, histidine 540, asparagine 544, and isoleucine 663 each contribute to the Fe cation site.

It belongs to the lipoxygenase family. Requires Fe cation as cofactor. Expressed in vascular smooth muscle cells.

It is found in the cytoplasm. The protein localises to the cytosol. It localises to the membrane. It catalyses the reaction (5Z,8Z,11Z,14Z)-eicosatetraenoate + O2 = (12S)-hydroperoxy-(5Z,8Z,10E,14Z)-eicosatetraenoate. It carries out the reaction (5Z,8Z,11Z,14Z)-eicosatetraenoate + O2 = (15S)-hydroperoxy-(5Z,8Z,11Z,13E)-eicosatetraenoate. The enzyme catalyses 2 leukotriene A4 + O2 + 2 H2O = 2 lipoxin A4. The catalysed reaction is 2 leukotriene A4 + O2 + 2 H2O = 2 lipoxin B4. It catalyses the reaction (14S)-hydroperoxy-(4Z,7Z,10Z,12E,16Z,19Z)-docosahexaenoate = (13S,14S)-epoxy-(4Z,7Z,9E,11E,16Z,19Z)-docosahexaenoate + H2O. It carries out the reaction N-(5Z,8Z,11Z,14Z)-eicosatetraenoyl-L-alanine + O2 = N-(15S)-hydroperoxy-(5Z,8Z,11Z,13E)-eicosatetraenoyl-alanine. The enzyme catalyses N-(5Z,8Z,11Z,14Z)-eicosatetraenoyl-L-alanine + O2 = N-(12S)-hydroperoxy-(5Z,8Z,10E,14Z)-eicosatetraenoyl-alanine. The catalysed reaction is N-(5Z,8Z,11Z,14Z)-eicosatetraenoyl-gamma-aminobutanoate + O2 = N-(15S)-hydroperoxy-(5Z,8Z,11Z,13E)-eicosatetraenoyl-gamma-aminobutanoate. It catalyses the reaction N-(5Z,8Z,11Z,14Z)-eicosatetraenoyl-gamma-aminobutanoate + O2 = N-(12S)-hydroperoxy-(5Z,8Z,10E,14Z)-eicosatetraenoyl-gamma-aminobutanoate. It carries out the reaction N-(5Z,8Z,11Z,14Z)-eicosatetraenoyl-glycine + O2 = N-(15S)-hydroperoxy-(5Z,8Z,11Z,13E)-eicosatetraenoyl-glycine. The enzyme catalyses N-(5Z,8Z,11Z,14Z)-eicosatetraenoyl-glycine + O2 = N-(12S)-hydroperoxy-(5Z,8Z,10E,14Z)-eicosatetraenoyl-glycine. The catalysed reaction is N-(5Z,8Z,11Z,14Z)-eicosatetraenoyl-taurine + O2 = N-(12S)-hydroperoxy-(5Z,8Z,10E,14Z)-eicosatetraenoyl-taurine. It catalyses the reaction N-(5Z,8Z,11Z,14Z)-eicosatetraenoyl-taurine + O2 = N-(15S)-hydroperoxy-(5Z,8Z,11Z,13E)-eicosatetraenoyl-taurine. It carries out the reaction (4Z,7Z,10Z,13Z,16Z,19Z)-docosahexaenoate + O2 = (14S)-hydroperoxy-(4Z,7Z,10Z,12E,16Z,19Z)-docosahexaenoate. The enzyme catalyses (7S)-hydroperoxy-(4Z,8E,10Z,13Z,16Z,19Z)-docosahexaenoate + O2 = (7S,14S)-dihydroperoxy-(4Z,8E,10Z,12E,16Z,19Z)-docosahexaenoate. The catalysed reaction is (7S)-hydroperoxy-(4Z,8E,10Z,13Z,16Z,19Z)-docosahexaenoate + O2 = (7S,17S)-dihydroperoxy-(4Z,8E,10Z,13Z,15E,19Z)-docosahexaenoate. It catalyses the reaction (5Z,8Z,11Z,14Z,17Z)-eicosapentaenoate + O2 = (12S)-hydroperoxy-(5Z,8Z,10E,14Z,17Z)-eicosapentaenoate. It carries out the reaction (8Z,11Z,14Z)-eicosatrienoate + O2 = (12S)-hydroperoxy-(8Z,10E,14Z)-eicosatrienoate. The enzyme catalyses (9Z,12Z)-octadecadienoate + O2 = (13S)-hydroperoxy-(9Z,11E)-octadecadienoate. The catalysed reaction is (5Z,8Z,11Z)-eicosatrienoate + O2 = (12S)-hydroperoxy-(5Z,8Z,10E)-eicosatrienoate. It catalyses the reaction (14R,15S)-epoxy-(5Z,8Z,11Z)-eicosatrienoate + O2 = (12S)-hydroperoxy-(14R,15S)-epoxy-(5Z,8Z,10E)-eicosatrienoate. It carries out the reaction (14S,15R)-epoxy-(5Z,8Z,11Z)-eicosatrienoate + O2 = (12S)-hydroperoxy-(14S,15R)-epoxy-(5Z,8Z,10E)-eicosatrienoate. It participates in lipid metabolism; hydroperoxy eicosatetraenoic acid biosynthesis. Activated by EGF. Arachidonic acid conversion is inhibited by (13S,14S)-epoxy-(4Z,7Z,9E,11E,16Z,19Z)-docosahexaenoate (13S,14S-epoxy-DHA). Arachidonate 12-lipoxygenase activity is decreased when PH decreases from 7.4 to 6. Catalyzes the regio and stereo-specific incorporation of molecular oxygen into free and esterified polyunsaturated fatty acids generating lipid hydroperoxides that can be further reduced to the corresponding hydroxy species. Mainly converts arachidonate ((5Z,8Z,11Z,14Z)-eicosatetraenoate) to the specific bioactive lipid (12S)-hydroperoxyeicosatetraenoate/(12S)-HPETE. Through the production of bioactive lipids like (12S)-HPETE it regulates different biological processes including platelet activation. It can also catalyze the epoxidation of double bonds of polyunsaturated fatty acids such as (14S)-hydroperoxy-docosahexaenoate/(14S)-HPDHA resulting in the formation of (13S,14S)-epoxy-DHA. Furthermore, it may participate in the sequential oxidations of DHA ((4Z,7Z,10Z,13Z,16Z,19Z)-docosahexaenoate) to generate specialized pro-resolving mediators (SPMs) like resolvin D5 ((7S,17S)-diHPDHA) and (7S,14S)-diHPDHA, that actively down-regulate the immune response and have anti-aggregation properties with platelets. An additional function involves a multistep process by which it transforms leukotriene A4/LTA4 into the bioactive lipids lipoxin A4/LXA4 and lipoxin B4/LXB4, both are vasoactive and LXA4 may regulate neutrophil function via occupancy of specific recognition sites. Can also peroxidize linoleate ((9Z,12Z)-octadecadienoate) to (13S)-hydroperoxyoctadecadienoate/ (13S-HPODE). Due to its role in regulating both the expression of the vascular endothelial growth factor (VEGF, an angiogenic factor involved in the survival and metastasis of solid tumors) and the expression of integrin beta-1 (known to affect tumor cell migration and proliferation), it can be regarded as protumorigenic. Important for cell survival, as it may play a role not only in proliferation but also in the prevention of apoptosis in vascular smooth muscle cells. In Homo sapiens (Human), this protein is Polyunsaturated fatty acid lipoxygenase ALOX12.